A 417-amino-acid chain; its full sequence is Serine hydroxymethyltransferase (417 aa).

(6S)-5,6,7,8-tetrahydrofolate-binding positions include Leu120 and 124–126 (GHL). Residue Lys229 is modified to N6-(pyridoxal phosphate)lysine. 354 to 356 (SPF) is a binding site for (6S)-5,6,7,8-tetrahydrofolate.

This sequence belongs to the SHMT family. As to quaternary structure, homodimer. The cofactor is pyridoxal 5'-phosphate.

Its subcellular location is the cytoplasm. It carries out the reaction (6R)-5,10-methylene-5,6,7,8-tetrahydrofolate + glycine + H2O = (6S)-5,6,7,8-tetrahydrofolate + L-serine. The protein operates within one-carbon metabolism; tetrahydrofolate interconversion. It functions in the pathway amino-acid biosynthesis; glycine biosynthesis; glycine from L-serine: step 1/1. Its function is as follows. Catalyzes the reversible interconversion of serine and glycine with tetrahydrofolate (THF) serving as the one-carbon carrier. This reaction serves as the major source of one-carbon groups required for the biosynthesis of purines, thymidylate, methionine, and other important biomolecules. Also exhibits THF-independent aldolase activity toward beta-hydroxyamino acids, producing glycine and aldehydes, via a retro-aldol mechanism. The polypeptide is Serine hydroxymethyltransferase (Acinetobacter baylyi (strain ATCC 33305 / BD413 / ADP1)).